The primary structure comprises 801 residues: Heavy metal tolerance factor 1 (801 aa).

At 1–24 (MGFSPFLDECRAEGLWPIGPSCNK) the chain is on the lumenal side. A helical membrane pass occupies residues 25-45 (IISFGVYTFFIVVNFIVLCIP). Residues 46–75 (NSNSANNNYRRMTDDDASSTSKLTISKILS) are Cytoplasmic-facing. The chain crosses the membrane as a helical span at residues 76 to 96 (ICTIFAVICQSIFYFCFTFYF). Over 97 to 101 (HPYTH) the chain is Lumenal. The helical transmembrane segment at 102-122 (LLLAFCVSKLFFWILSLCSFS) threads the bilayer. The Cytoplasmic segment spans residues 123–129 (KWRNQPS). Residues 130–150 (TPISLAFAFSAALLIHCIPLT) traverse the membrane as a helical segment. The Lumenal segment spans residues 151–167 (DWKKYFEPTSKNRGDLT). The chain crosses the membrane as a helical span at residues 168–188 (FYIIELALVTVVFFFTIVTGL). Residues 189-226 (FNFSGCSSRESAWNNLSKKVVTVAPYIWPTKSISLQLR) lie on the Cytoplasmic side of the membrane. Residues 227 to 247 (VVFCLFLLIIGRLINVSLPIL) traverse the membrane as a helical segment. One can recognise an ABC transmembrane type-1 domain in the interval 227–516 (VVFCLFLLII…FGTIYRVIQK (290 aa)). Topologically, residues 248 to 264 (SKWIVDELATPDTFQYS) are lumenal. The helical transmembrane segment at 265-285 (LLFLATFLKFLQGNGAMGGFL) threads the bilayer. Residues 286–341 (NTVRTYLWIPIQQYTTRELEVELFKHLHSLSLRWHLSRKTGQVLRVMDRGTSSVNN) are Cytoplasmic-facing. The helical transmembrane segment at 342 to 364 (ILNYILFNVVPTIADIVIAVIFF) threads the bilayer. The Lumenal portion of the chain corresponds to 365–371 (FSAFNAY). The chain crosses the membrane as a helical span at residues 372-390 (FGLIVFGTMALYLTVTISI). Topologically, residues 391-461 (TEWRTQYIRE…SLAFLNCLQN (71 aa)) are cytoplasmic. Residues 462-482 (AIIGIGMIGGSVFVVYMIVHE) form a helical membrane-spanning segment. The Lumenal portion of the chain corresponds to 483-489 (KTLTVGD). Residues 490–510 (YVLFTTYLLQLYTPLNFFGTI) form a helical membrane-spanning segment. Topologically, residues 511-801 (YRVIQKAFVD…KSIELGEELP (291 aa)) are cytoplasmic. One can recognise an ABC transporter domain in the interval 550 to 784 (ISVKNLTFEY…QGTYASMWEA (235 aa)). Residue 583 to 590 (GSSGSGKS) coordinates ATP.

Belongs to the ABC transporter superfamily. ABCB family. Heavy Metal importer (TC 3.A.1.210) subfamily. Expressed in coelomocytes, as well as in head and tail neurons, and in the intestinal cells.

It is found in the vacuole membrane. Its subcellular location is the early endosome. The protein resides in the late endosome. The protein localises to the recycling endosome. Its function is as follows. May play a pivotal role in the detoxification of heavy metals such as cadmium but do not depend exclusively on phytochelatins (PC) synthesis. This chain is Heavy metal tolerance factor 1, found in Caenorhabditis elegans.